Reading from the N-terminus, the 307-residue chain is Phosphate import ATP-binding protein PstB (307 aa).

A disordered region spans residues 1 to 30 (MSETTYTTTEDTDDTNSTDSMVGTTTGETD). Residues 48–302 (LGVDDLDVYY…PQSERVEDYI (255 aa)) form the ABC transporter domain. Position 80–87 (80–87 (GPSGCGKS)) interacts with ATP.

This sequence belongs to the ABC transporter superfamily. Phosphate importer (TC 3.A.1.7) family. In terms of assembly, the complex is composed of two ATP-binding proteins (PstB), two transmembrane proteins (PstC and PstA) and a solute-binding protein (PstS).

Its subcellular location is the cell membrane. The catalysed reaction is phosphate(out) + ATP + H2O = ADP + 2 phosphate(in) + H(+). Functionally, part of the ABC transporter complex PstSACB involved in phosphate import. Responsible for energy coupling to the transport system. The chain is Phosphate import ATP-binding protein PstB from Haloquadratum walsbyi (strain DSM 16790 / HBSQ001).